The primary structure comprises 396 residues: Acetylornithine aminotransferase 2 (396 aa).

Pyridoxal 5'-phosphate-binding positions include 102 to 103 (GA) and Phe-134. Arg-137 contacts N(2)-acetyl-L-ornithine. 219–222 (DEVQ) is a binding site for pyridoxal 5'-phosphate. At Lys-248 the chain carries N6-(pyridoxal phosphate)lysine. Position 276 (Thr-276) interacts with pyridoxal 5'-phosphate.

This sequence belongs to the class-III pyridoxal-phosphate-dependent aminotransferase family. ArgD subfamily. In terms of assembly, homodimer. Requires pyridoxal 5'-phosphate as cofactor.

The protein localises to the cytoplasm. It catalyses the reaction N(2)-acetyl-L-ornithine + 2-oxoglutarate = N-acetyl-L-glutamate 5-semialdehyde + L-glutamate. It participates in amino-acid biosynthesis; L-arginine biosynthesis; N(2)-acetyl-L-ornithine from L-glutamate: step 4/4. The chain is Acetylornithine aminotransferase 2 from Bordetella parapertussis (strain 12822 / ATCC BAA-587 / NCTC 13253).